A 513-amino-acid chain; its full sequence is ATP synthase subunit alpha (513 aa).

Residue 169-176 (GDRQTGKT) coordinates ATP.

This sequence belongs to the ATPase alpha/beta chains family. As to quaternary structure, F-type ATPases have 2 components, CF(1) - the catalytic core - and CF(0) - the membrane proton channel. CF(1) has five subunits: alpha(3), beta(3), gamma(1), delta(1), epsilon(1). CF(0) has three main subunits: a(1), b(2) and c(9-12). The alpha and beta chains form an alternating ring which encloses part of the gamma chain. CF(1) is attached to CF(0) by a central stalk formed by the gamma and epsilon chains, while a peripheral stalk is formed by the delta and b chains.

The protein resides in the cell inner membrane. It carries out the reaction ATP + H2O + 4 H(+)(in) = ADP + phosphate + 5 H(+)(out). Functionally, produces ATP from ADP in the presence of a proton gradient across the membrane. The alpha chain is a regulatory subunit. The sequence is that of ATP synthase subunit alpha from Ruegeria sp. (strain TM1040) (Silicibacter sp.).